Here is a 186-residue protein sequence, read N- to C-terminus: Nicotinamidase/pyrazinamidase (186 aa).

Catalysis depends on D8, which acts as the Proton acceptor. Fe cation-binding residues include D49, H51, H57, and H71. K96 is a catalytic residue. C138 acts as the Nucleophile in catalysis.

This sequence belongs to the isochorismatase family. In terms of assembly, monomer. Mn(2+) serves as cofactor. Requires Fe(2+) as cofactor.

The catalysed reaction is nicotinamide + H2O = nicotinate + NH4(+). It carries out the reaction pyrazinamide + H2O = pyrazine-2-carboxylate + NH4(+). Its pathway is cofactor biosynthesis; nicotinate biosynthesis; nicotinate from nicotinamide: step 1/1. With respect to regulation, is inhibited by Cu(2+), Zn(2+) and Fe(3+). Functionally, catalyzes the deamidation of nicotinamide (NAM) into nicotinate. Likely functions in the cyclical salvage pathway for production of NAD from nicotinamide. Is involved in the activation of the first-line antituberculous drug pyrazinamide (PZA) by converting it into the active form, pyrazinoic acid. This chain is Nicotinamidase/pyrazinamidase, found in Mycobacterium tuberculosis (strain ATCC 25618 / H37Rv).